The following is a 217-amino-acid chain: Deoxyribose-phosphate aldolase 1 (217 aa).

Asp89 functions as the Proton donor/acceptor in the catalytic mechanism. Lys151 serves as the catalytic Schiff-base intermediate with acetaldehyde. The Proton donor/acceptor role is filled by Lys180.

It belongs to the DeoC/FbaB aldolase family. DeoC type 1 subfamily.

It is found in the cytoplasm. It catalyses the reaction 2-deoxy-D-ribose 5-phosphate = D-glyceraldehyde 3-phosphate + acetaldehyde. The protein operates within carbohydrate degradation; 2-deoxy-D-ribose 1-phosphate degradation; D-glyceraldehyde 3-phosphate and acetaldehyde from 2-deoxy-alpha-D-ribose 1-phosphate: step 2/2. Its function is as follows. Catalyzes a reversible aldol reaction between acetaldehyde and D-glyceraldehyde 3-phosphate to generate 2-deoxy-D-ribose 5-phosphate. In Cutibacterium acnes (strain DSM 16379 / KPA171202) (Propionibacterium acnes), this protein is Deoxyribose-phosphate aldolase 1.